A 299-amino-acid chain; its full sequence is Probable plastid-lipid-associated protein 13, chloroplastic (299 aa).

Residues Met-1–Arg-48 constitute a chloroplast transit peptide. Ala-2 is subject to N-acetylvaline.

This sequence belongs to the PAP/fibrillin family.

It localises to the plastid. Its subcellular location is the chloroplast. The protein resides in the plastoglobule. The sequence is that of Probable plastid-lipid-associated protein 13, chloroplastic (PAP13) from Arabidopsis thaliana (Mouse-ear cress).